Reading from the N-terminus, the 392-residue chain is N-acyl-phosphatidylethanolamine-hydrolyzing phospholipase D (392 aa).

The residue at position 1 (Met-1) is an N-acetylmethionine. Polar residues predominate over residues 1–16 (MDENETNQLLMTSNQY). Residues 1-39 (MDENETNQLLMTSNQYPKEAVRKRQNSRNSGGSDSSRFS) form a disordered region. The span at 27–36 (SRNSGGSDSS) shows a compositional bias: low complexity. 2 residues coordinate Zn(2+): His-183 and His-185. Tyr-186 contacts an N-acyl-1,2-diacyl-sn-glycero-3-phosphoethanolamine. Asp-187, His-188, and His-251 together coordinate Zn(2+). Lys-254 and Met-258 together coordinate deoxycholate. Residue Asp-282 participates in Zn(2+) binding. His-319 lines the an N-acyl-1,2-diacyl-sn-glycero-3-phosphoethanolamine pocket. A Zn(2+)-binding site is contributed by His-341. Residue Ala-346 coordinates deoxycholate.

The protein belongs to the NAPE-PLD family. Homodimer. Bile acids promote the assembly of inactive monomers into an active dimer and enable catalysis. Requires Zn(2+) as cofactor. In terms of tissue distribution, widely expressed. Highest expression in brain, kidney and testis (at protein level). Expressed in adipose tissue (at protein level).

It localises to the golgi apparatus membrane. The protein resides in the early endosome membrane. Its subcellular location is the nucleus envelope. The protein localises to the nucleus. It is found in the nucleoplasm. It carries out the reaction an N-acyl-1,2-diacyl-sn-glycero-3-phosphoethanolamine + H2O = an N-acylethanolamine + a 1,2-diacyl-sn-glycero-3-phosphate + H(+). It catalyses the reaction N-butanoyl-1-hexadecanoyl-2-(9Z,12Z-octadecadienoyl)-sn-glycero-3-phosphoethanolamine + H2O = N-butanoyl ethanolamine + 1-hexadecanoyl-2-(9Z,12Z-octadecadienoyl)-sn-glycero-3-phosphate + H(+). The catalysed reaction is N-hexanoyl-1-hexadecanoyl-2-(9Z,12Z-octadecadienoyl)-sn-glycero-3-phosphoethanolamine + H2O = N-hexanoyl ethanolamine + 1-hexadecanoyl-2-(9Z,12Z-octadecadienoyl)-sn-glycero-3-phosphate + H(+). The enzyme catalyses N-octanoyl-1-hexadecanoyl-2-(9Z,12Z-octadecadienoyl)-sn-glycero-3-phosphoethanolamine + H2O = N-octanoyl ethanolamine + 1-hexadecanoyl-2-(9Z,12Z-octadecadienoyl)-sn-glycero-3-phosphate + H(+). It carries out the reaction N-decanoyl-1-hexadecanoyl-2-(9Z,12Z-octadecadienoyl)-sn-glycero-3-phosphoethanolamine + H2O = N-decanoyl ethanolamine + 1-hexadecanoyl-2-(9Z,12Z-octadecadienoyl)-sn-glycero-3-phosphate + H(+). It catalyses the reaction N-dodecanoyl-1,2-di-(9Z-octadecenoyl)-sn-glycero-3-phosphoethanolamine + H2O = N-dodecanoylethanolamine + 1,2-di-(9Z-octadecenoyl)-sn-glycero-3-phosphate + H(+). The catalysed reaction is N-tetradecanoyl-1,2-di-(9Z-octadecenoyl)-sn-glycero-3-phosphoethanolamine + H2O = N-tetradecanoylethanolamine + 1,2-di-(9Z-octadecenoyl)-sn-glycero-3-phosphate + H(+). The enzyme catalyses N-hexadecanoyl-1,2-di-(9Z-octadecenoyl)-sn-glycero-3-phosphoethanolamine + H2O = N-hexadecanoylethanolamine + 1,2-di-(9Z-octadecenoyl)-sn-glycero-3-phosphate + H(+). It carries out the reaction N,1-dihexadecanoyl-2-(9Z,12Z-octadecadienoyl)-sn-glycero-3-phosphoethanolamine + H2O = 1-hexadecanoyl-2-(9Z,12Z-octadecadienoyl)-sn-glycero-3-phosphate + N-hexadecanoylethanolamine + H(+). It catalyses the reaction N-octadecanoyl-1,2-di-(9Z-octadecenoyl)-sn-glycero-3-phosphoethanolamine + H2O = N-octadecanoyl ethanolamine + 1,2-di-(9Z-octadecenoyl)-sn-glycero-3-phosphate + H(+). The catalysed reaction is N,1,2-tri-(9Z-octadecenoyl)-sn-glycero-3-phosphoethanolamine + H2O = N-(9Z-octadecenoyl) ethanolamine + 1,2-di-(9Z-octadecenoyl)-sn-glycero-3-phosphate + H(+). The enzyme catalyses N-(5Z,8Z,11Z,14Z-eicosatetraenoyl)-1,2-diacyl-sn-glycero-3-phosphoethanolamine + H2O = N-(5Z,8Z,11Z,14Z-eicosatetraenoyl)-ethanolamine + a 1,2-diacyl-sn-glycero-3-phosphate + H(+). It carries out the reaction N-(5Z,8Z,11Z,14Z-eicosatetraenoyl)-1,2-di-(9Z-octadecenoyl)-sn-glycero-3-phosphoethanolamine + H2O = N-(5Z,8Z,11Z,14Z-eicosatetraenoyl)-ethanolamine + 1,2-di-(9Z-octadecenoyl)-sn-glycero-3-phosphate + H(+). It catalyses the reaction 1-O-(1Z-octadecenoyl)-2-(9Z-octadecenoyl)-sn-glycero-3-phospho-N-hexadecanoyl-ethanolamine + H2O = 1-O-(1Z-octadecenoyl)-2-(9Z-octadecenoyl)-sn-glycero-3-phosphate + N-hexadecanoylethanolamine + H(+). The catalysed reaction is N,1-diacyl-sn-glycero-3-phosphoethanolamine + H2O = an N-acylethanolamine + a 1-acyl-sn-glycero-3-phosphate + H(+). The enzyme catalyses N,1-dihexadecanoyl-sn-glycero-3-phosphoethanolamine + H2O = N-hexadecanoylethanolamine + 1-hexadecanoyl-sn-glycero-3-phosphate + H(+). It carries out the reaction N-(5Z,8Z,11Z,14Z-eicosatetraenoyl)-1-(9Z-octadecenoyl)-sn-glycero-3-phosphoethanolamine + H2O = N-(5Z,8Z,11Z,14Z-eicosatetraenoyl)-ethanolamine + 1-(9Z-octadecenoyl)-sn-glycero-3-phosphate + H(+). Its activity is regulated as follows. Activated by divalent cations. Activated by bile acids. Its function is as follows. D-type phospholipase that hydrolyzes N-acyl-phosphatidylethanolamines (NAPEs) to produce bioactive N-acylethanolamines/fatty acid ethanolamides (NAEs/FAEs) and phosphatidic acid. Cleaves the terminal phosphodiester bond of diacyl- and alkenylacyl-NAPEs, primarily playing a role in the generation of long-chain saturated and monounsaturated NAEs in the brain. May control NAPE homeostasis in dopaminergic neuron membranes and regulate neuron survival, partly through RAC1 activation. As a regulator of lipid metabolism in the adipose tissue, mediates the crosstalk between adipocytes, gut microbiota and immune cells to control body temperature and weight. In particular, regulates energy homeostasis by promoting cold-induced brown or beige adipocyte differentiation program to generate heat from fatty acids and glucose. Has limited D-type phospholipase activity toward N-acyl lyso-NAPEs. The polypeptide is N-acyl-phosphatidylethanolamine-hydrolyzing phospholipase D (NAPEPLD) (Bos taurus (Bovine)).